A 238-amino-acid polypeptide reads, in one-letter code: C-reactive protein (238 aa).

A signal peptide spans 1–16; sequence MERFALWFIFLAGSLA. A Pyrrolidone carboxylic acid modification is found at glutamine 17. The Pentraxin (PTX) domain occupies 21–223; the sequence is VGNVFLFPKP…QATTQPKRQC (203 aa). Cysteine 52 and cysteine 113 are oxidised to a cystine. Ca(2+) contacts are provided by aspartate 76, asparagine 77, glutamate 154, glutamine 155, aspartate 156, and glutamine 166.

The protein belongs to the pentraxin family. As to quaternary structure, homodimer; disulfide-linked. It is not known if it assembles into a pentraxin (or pentaxin) structure. Pentaxins have a discoid arrangement of 5 non-covalently bound subunits. Ca(2+) is required as a cofactor. Cys-89 or Cys-223 or Cys-236 could be involved in interchain disulfide linkage.

Its subcellular location is the secreted. Its function is as follows. Displays several functions associated with host defense: it promotes agglutination, bacterial capsular swelling, phagocytosis, and complement fixation through its calcium-dependent binding to phosphorylcholine. This chain is C-reactive protein (crp), found in Xenopus laevis (African clawed frog).